Here is a 437-residue protein sequence, read N- to C-terminus: Adenylosuccinate synthetase (437 aa).

Residues 12–18 and 40–42 each bind GTP; these read GDEGKGK and GHT. Asp13 serves as the catalytic Proton acceptor. The Mg(2+) site is built by Asp13 and Gly40. Residues 13-16, 38-41, Thr128, Arg142, Gln223, Thr238, and Arg302 contribute to the IMP site; these read DEGK and NAGH. His41 functions as the Proton donor in the catalytic mechanism. 298-304 contributes to the substrate binding site; sequence TTTGRRR. Residues Arg304, 330–332, and 412–414 each bind GTP; these read KLD and SLG.

Belongs to the adenylosuccinate synthetase family. As to quaternary structure, homodimer. It depends on Mg(2+) as a cofactor.

Its subcellular location is the cytoplasm. It catalyses the reaction IMP + L-aspartate + GTP = N(6)-(1,2-dicarboxyethyl)-AMP + GDP + phosphate + 2 H(+). The protein operates within purine metabolism; AMP biosynthesis via de novo pathway; AMP from IMP: step 1/2. Its function is as follows. Plays an important role in the de novo pathway of purine nucleotide biosynthesis. Catalyzes the first committed step in the biosynthesis of AMP from IMP. The polypeptide is Adenylosuccinate synthetase (Prochlorococcus marinus (strain MIT 9211)).